Reading from the N-terminus, the 68-residue chain is Large ribosomal subunit protein uL29 (68 aa).

The protein belongs to the universal ribosomal protein uL29 family.

The sequence is that of Large ribosomal subunit protein uL29 (rpl29) from Pyrococcus horikoshii (strain ATCC 700860 / DSM 12428 / JCM 9974 / NBRC 100139 / OT-3).